The primary structure comprises 197 residues: Pyridoxal 5'-phosphate synthase subunit PdxT (197 aa).

53-55 (GES) contributes to the L-glutamine binding site. C85 serves as the catalytic Nucleophile. L-glutamine is bound by residues R114 and 142-143 (IR). Active-site charge relay system residues include H179 and E181.

This sequence belongs to the glutaminase PdxT/SNO family. As to quaternary structure, in the presence of PdxS, forms a dodecamer of heterodimers. Only shows activity in the heterodimer.

It catalyses the reaction aldehydo-D-ribose 5-phosphate + D-glyceraldehyde 3-phosphate + L-glutamine = pyridoxal 5'-phosphate + L-glutamate + phosphate + 3 H2O + H(+). It carries out the reaction L-glutamine + H2O = L-glutamate + NH4(+). It participates in cofactor biosynthesis; pyridoxal 5'-phosphate biosynthesis. Its function is as follows. Catalyzes the hydrolysis of glutamine to glutamate and ammonia as part of the biosynthesis of pyridoxal 5'-phosphate. The resulting ammonia molecule is channeled to the active site of PdxS. The polypeptide is Pyridoxal 5'-phosphate synthase subunit PdxT (Pyrococcus furiosus (strain ATCC 43587 / DSM 3638 / JCM 8422 / Vc1)).